We begin with the raw amino-acid sequence, 288 residues long: Intermediate transcription factor 3 small subunit (288 aa).

It belongs to the orthopoxvirus OPG134 family. As to quaternary structure, heterodimer of a 45 kDa (A23R) and a 32 kDa (A8R) subunit to form the virus intermediate transcription factor (VITF)-3.

In terms of biological role, acts with RNA polymerase to initiate transcription from intermediate gene promoters. This Vaccinia virus (strain Copenhagen) (VACV) protein is Intermediate transcription factor 3 small subunit (OPG134).